The sequence spans 226 residues: Leucyl/phenylalanyl-tRNA--protein transferase (226 aa).

Belongs to the L/F-transferase family.

The protein localises to the cytoplasm. It catalyses the reaction N-terminal L-lysyl-[protein] + L-leucyl-tRNA(Leu) = N-terminal L-leucyl-L-lysyl-[protein] + tRNA(Leu) + H(+). It carries out the reaction N-terminal L-arginyl-[protein] + L-leucyl-tRNA(Leu) = N-terminal L-leucyl-L-arginyl-[protein] + tRNA(Leu) + H(+). The catalysed reaction is L-phenylalanyl-tRNA(Phe) + an N-terminal L-alpha-aminoacyl-[protein] = an N-terminal L-phenylalanyl-L-alpha-aminoacyl-[protein] + tRNA(Phe). Its function is as follows. Functions in the N-end rule pathway of protein degradation where it conjugates Leu, Phe and, less efficiently, Met from aminoacyl-tRNAs to the N-termini of proteins containing an N-terminal arginine or lysine. This is Leucyl/phenylalanyl-tRNA--protein transferase from Pseudomonas fluorescens (strain Pf0-1).